The primary structure comprises 90 residues: Small ribosomal subunit protein uS15c (90 aa).

Belongs to the universal ribosomal protein uS15 family. As to quaternary structure, part of the 30S ribosomal subunit.

It is found in the plastid. The protein resides in the chloroplast. The sequence is that of Small ribosomal subunit protein uS15c (rps15-A) from Ipomoea purpurea (Common morning glory).